The primary structure comprises 675 residues: MEVIRYPDSPFKLHQPFPPAGDQPTAIAGLLEGLSDGLAYQTLLGVTGSGKTYTMANVIAQSGRPAIIMAHNKTLAAQLYAEMREFFPENAVEYFVSYYDYYQPEAYVPSRDLFIEKDSAINEHIEQMRLSATKNLMTRDDVIIVATVSAIYGIGDPTEYQQMVLSVKEGDTIEQRDIIATLVSMQYERGDLDFKRGSFRVRGDVIDVYPAESSENALRISLFDDEIDRLDMFDPLSGSLHQRVGRYTVFPSSHYVTPRDTVLRACDSIKEELRERIDFFTKENRPVEQQRIEQRTRFDLEMLYEMGFCKGIENYSRHFSGKKEGEPPPTLMDYLPSNAIMFIDESHVTVTQIGGMYKGDASRKQNLVDYGFRLPSARDNRPLKFHEFEKVMPQTVFVSATPAKYEEEHAGQVVEQVVRPTGLVDPQIIIRPVATQVDDLMSEINDRIQKGERVLVTTLTKRMAEQLTDYYSELGIKVRYLHSDIDTVERVEIIRDLRLGLFDVLVGINLLREGLDIPEVSLVAILDADKEGFLRSHRSLIQTIGRAARNVNGVAILYADKITDSMKAAIDETERRREKQIKFNEEHGIVPQQIKKQVKDIIDGVYHEEDSGKGRRQGKNKVKVGEIHNEEDAIKEIAKLEKAMQQAARDLQFEEAAVLRDRIRNIKENLLFGAE.

Positions Glu-32–Val-417 constitute a Helicase ATP-binding domain. Gly-45–Thr-52 lines the ATP pocket. Residues Tyr-98 to Ile-121 carry the Beta-hairpin motif. In terms of domain architecture, Helicase C-terminal spans Gln-436–Ile-602. One can recognise a UVR domain in the interval Ile-634–Asn-669.

It belongs to the UvrB family. As to quaternary structure, forms a heterotetramer with UvrA during the search for lesions. Interacts with UvrC in an incision complex.

Its subcellular location is the cytoplasm. Its function is as follows. The UvrABC repair system catalyzes the recognition and processing of DNA lesions. A damage recognition complex composed of 2 UvrA and 2 UvrB subunits scans DNA for abnormalities. Upon binding of the UvrA(2)B(2) complex to a putative damaged site, the DNA wraps around one UvrB monomer. DNA wrap is dependent on ATP binding by UvrB and probably causes local melting of the DNA helix, facilitating insertion of UvrB beta-hairpin between the DNA strands. Then UvrB probes one DNA strand for the presence of a lesion. If a lesion is found the UvrA subunits dissociate and the UvrB-DNA preincision complex is formed. This complex is subsequently bound by UvrC and the second UvrB is released. If no lesion is found, the DNA wraps around the other UvrB subunit that will check the other stand for damage. The chain is UvrABC system protein B from Neisseria meningitidis serogroup A / serotype 4A (strain DSM 15465 / Z2491).